We begin with the raw amino-acid sequence, 524 residues long: Excitatory amino acid transporter 3 (524 aa).

The Cytoplasmic segment spans residues 1–18 (MGKPARKGCDWKRFLRNN). Residues 19 to 38 (WLLLSTVVAVVLGIVIGVLV) traverse the membrane as a helical segment. Residues 39–61 (REYSKLSNLEKFYFSFPGEILMR) are Extracellular-facing. Residues 62–82 (MLKLVILPLIVSSMITGVATL) form a helical membrane-spanning segment. At 83–93 (DSNVSGKIGLR) the chain is on the cytoplasmic side. The chain crosses the membrane as a helical span at residues 94–114 (AVVYYFCTTLIAVILGIVLVV). Residues Tyr-98, Thr-101, and Thr-102 each contribute to the Na(+) site. At 115–205 (SIKPGVTQKV…KTKEYKVVGM (91 aa)) the chain is on the extracellular side. Asn-178 and Asn-195 each carry an N-linked (GlcNAc...) asparagine glycan. The chain crosses the membrane as a helical span at residues 206-229 (YSDGINVLGLIVFCLVLGIVIGRK). Residues 230 to 238 (WEKGQILVD) lie on the Cytoplasmic side of the membrane. Residues 239-266 (FFNALSDATMKIVQIIMCYMPIGILFLI) form a helical membrane-spanning segment. Over 267–286 (AGKIIEVEDWEIFRKLGLYM) the chain is Extracellular. A helical transmembrane segment spans residues 287 to 308 (ATVLSGLAIHSIVILPLIYFII). At 309–313 (VRKNP) the chain is on the cytoplasmic side. An intramembrane region (discontinuously helical) is located at residues 314–344 (FQFAMGMAQALLTALMISSSSATLPVTFRCA). Positions 331 and 333 each coordinate L-aspartate. Residues 345–353 (EEKNRVDKR) are Cytoplasmic-facing. Residues 354-380 (ITRFVLPVGATINMDGTALYEAVAAVF) form a helical membrane-spanning segment. The Na(+) site is built by Gly-362, Thr-364, Asn-366, and Asp-368. Thr-370 lines the L-aspartate pocket. Over 381 to 393 (IAQLNDLDLSVGQ) the chain is Extracellular. The segment at residues 394–427 (IITISVTATAASIGAAGVPQPGLVTMVIVLSAVG) is an intramembrane region (discontinuously helical). 3 residues coordinate Na(+): Ser-405, Ile-406, and Ala-408. Val-411 provides a ligand contact to L-aspartate. Residues 428–440 (LPAEDVTLIIAVD) are Extracellular-facing. A helical membrane pass occupies residues 441-462 (WLLDRFRTMVNVLGDAFGTGIV). Positions 447, 448, and 451 each coordinate L-aspartate. Na(+)-binding residues include Asn-451 and Asp-455. The Cytoplasmic segment spans residues 463–524 (EKLSKKELEQ…TISFTQTSQF (62 aa)). Ser-517 and Ser-522 each carry phosphoserine.

This sequence belongs to the dicarboxylate/amino acid:cation symporter (DAACS) (TC 2.A.23) family. SLC1A1 subfamily. As to quaternary structure, homotrimer. Interacts with ARL6IP5. Interacts with RTN2 (via N-terminus); the interaction promotes cell surface expression of SLC1A1. Interacts with SORCS2; this interaction is important for normal expression at the cell membrane.

The protein resides in the cell membrane. It is found in the apical cell membrane. Its subcellular location is the synapse. It localises to the synaptosome. The protein localises to the early endosome membrane. The protein resides in the late endosome membrane. It is found in the recycling endosome membrane. The enzyme catalyses K(+)(in) + L-glutamate(out) + 3 Na(+)(out) + H(+)(out) = K(+)(out) + L-glutamate(in) + 3 Na(+)(in) + H(+)(in). The catalysed reaction is K(+)(in) + L-aspartate(out) + 3 Na(+)(out) + H(+)(out) = K(+)(out) + L-aspartate(in) + 3 Na(+)(in) + H(+)(in). It catalyses the reaction D-aspartate(out) + K(+)(in) + 3 Na(+)(out) + H(+)(out) = D-aspartate(in) + K(+)(out) + 3 Na(+)(in) + H(+)(in). It carries out the reaction K(+)(in) + L-cysteine(out) + 3 Na(+)(out) + H(+)(out) = K(+)(out) + L-cysteine(in) + 3 Na(+)(in) + H(+)(in). In terms of biological role, sodium-dependent, high-affinity amino acid transporter that mediates the uptake of L-glutamate and also L-aspartate and D-aspartate. Can also transport L-cysteine. Functions as a symporter that transports one amino acid molecule together with two or three Na(+) ions and one proton, in parallel with the counter-transport of one K(+) ion. Mediates Cl(-) flux that is not coupled to amino acid transport; this avoids the accumulation of negative charges due to aspartate and Na(+) symport. Plays an important role in L-glutamate and L-aspartate reabsorption in renal tubuli. Plays a redundant role in the rapid removal of released glutamate from the synaptic cleft, which is essential for terminating the postsynaptic action of glutamate. Contributes to glutathione biosynthesis and protection against oxidative stress via its role in L-glutamate and L-cysteine transport. Negatively regulated by ARL6IP5. The sequence is that of Excitatory amino acid transporter 3 (SLC1A1) from Bos taurus (Bovine).